A 604-amino-acid chain; its full sequence is MHRYRTHTCGALRPSDVGQTVRLSGWCHRIRDHGGVLFIDLRDHYGLTQCVIDSDSPAFKAAETARSEWVIRIDGRVRTRPAGTENAELPTGSVEVYIDDLEVLGPAGELPLPVFGDQEYPEETRLKYRFLDLRREKLHANIMKRGAIIDSLRRRMREGGFFEFQTPILTASSPEGARDYLVPSRVHPGKFYALPQAPQQFKQLTMIAGFDRYFQIAPCFRDEDARADRSPGEFYQLDIEMSFVTQEDVFQAVEPVLRGVFEEFANGKRVTKEFPRITYADAMLKYGVDKPDLRNPLIIADVTDEFADDAVEFKAFKGVIKSGGVVRAIPATGAAGQPRSFFDKLNDWARSEGAPGLGYIVFEEEGGALTGKGPIAKFIPPEIQARIAQKAGAKAGDAVFFAAGTEAKAAALAGKARIRIGDELKLSDTDQFAFCWVVDFPMYEWNEEDKKIDFSHNPFSMPNYDRDAFLALGEEDAEKILGIKAFQYDIVCNGIELSSGAIRNHRPDVMEKAFAIAGYGRDVLEEKFGGMLNALRLGAPPHGGIAPGVDRIVMLLCEEPNIREVVLFPMNQRAEDLMMGAPAEATPKQLRELHIRLNLPEKKG.

Glu175 contacts L-aspartate. The tract at residues 199–202 (QQFK) is aspartate. L-aspartate contacts are provided by Arg221 and His456. An ATP-binding site is contributed by 221-223 (RDE). Glu496 provides a ligand contact to ATP. Arg503 is an L-aspartate binding site. ATP is bound at residue 548–551 (GVDR).

It belongs to the class-II aminoacyl-tRNA synthetase family. Type 1 subfamily. In terms of assembly, homodimer.

It localises to the cytoplasm. It carries out the reaction tRNA(Asx) + L-aspartate + ATP = L-aspartyl-tRNA(Asx) + AMP + diphosphate. Aspartyl-tRNA synthetase with relaxed tRNA specificity since it is able to aspartylate not only its cognate tRNA(Asp) but also tRNA(Asn). Reaction proceeds in two steps: L-aspartate is first activated by ATP to form Asp-AMP and then transferred to the acceptor end of tRNA(Asp/Asn). This Methylorubrum populi (strain ATCC BAA-705 / NCIMB 13946 / BJ001) (Methylobacterium populi) protein is Aspartate--tRNA(Asp/Asn) ligase.